A 382-amino-acid polypeptide reads, in one-letter code: UDP-N-acetylglucosamine--N-acetylmuramyl-(pentapeptide) pyrophosphoryl-undecaprenol N-acetylglucosamine transferase (382 aa).

Residues T11–G13, N124, R164, S192, and Q314 each bind UDP-N-acetyl-alpha-D-glucosamine.

Belongs to the glycosyltransferase 28 family. MurG subfamily.

It is found in the cell membrane. It carries out the reaction di-trans,octa-cis-undecaprenyl diphospho-N-acetyl-alpha-D-muramoyl-L-alanyl-D-glutamyl-meso-2,6-diaminopimeloyl-D-alanyl-D-alanine + UDP-N-acetyl-alpha-D-glucosamine = di-trans,octa-cis-undecaprenyl diphospho-[N-acetyl-alpha-D-glucosaminyl-(1-&gt;4)]-N-acetyl-alpha-D-muramoyl-L-alanyl-D-glutamyl-meso-2,6-diaminopimeloyl-D-alanyl-D-alanine + UDP + H(+). It functions in the pathway cell wall biogenesis; peptidoglycan biosynthesis. Cell wall formation. Catalyzes the transfer of a GlcNAc subunit on undecaprenyl-pyrophosphoryl-MurNAc-pentapeptide (lipid intermediate I) to form undecaprenyl-pyrophosphoryl-MurNAc-(pentapeptide)GlcNAc (lipid intermediate II). The polypeptide is UDP-N-acetylglucosamine--N-acetylmuramyl-(pentapeptide) pyrophosphoryl-undecaprenol N-acetylglucosamine transferase (Deinococcus deserti (strain DSM 17065 / CIP 109153 / LMG 22923 / VCD115)).